A 289-amino-acid chain; its full sequence is Bifunctional aminodeoxychorismate lyase / D-amino acid transaminase (289 aa).

Position 50 (Arg-50) interacts with pyridoxal 5'-phosphate. An N6-(pyridoxal phosphate)lysine modification is found at Lys-149. Residues Tyr-153, Thr-216, and Thr-217 each contribute to the pyridoxal 5'-phosphate site. 2-oxoglutarate is bound at residue Ser-252. Ser-253 is a binding site for pyridoxal 5'-phosphate. Positions 254 and 255 each coordinate 2-oxoglutarate.

Belongs to the class-IV pyridoxal-phosphate-dependent aminotransferase family. Homodimer. It depends on pyridoxal 5'-phosphate as a cofactor.

The catalysed reaction is 4-amino-4-deoxychorismate = 4-aminobenzoate + pyruvate + H(+). The enzyme catalyses D-alanine + 2-oxoglutarate = D-glutamate + pyruvate. It functions in the pathway cofactor biosynthesis; tetrahydrofolate biosynthesis; 4-aminobenzoate from chorismate: step 2/2. It participates in cell wall biogenesis; peptidoglycan biosynthesis. Functionally, bifunctional enzyme that catalyzes two enzymatic reactions in biochemically unrelated pathways: acts as an aminodeoxychorismate (ADC) lyase (ADCL) in folate biosynthesis, converting 4-amino-4-deoxychorismate (ADC) to 4-aminobenzoate (PABA), and as a D-amino acid transaminase (DAAT) in peptidoglycan (PG) biosynthesis. DAAT activity is strictly restricted to D-alanine and D-glutamate. May function as a metabolic toggle that alternates between ADCL and DAAT activity, prioritizing the former over the latter in response to substrate accumulation. Bifunctionality of this enzyme provides a failsafe mechanism for a metabolic coupling between nucleic acid and cell wall biosynthesis that appears to ensure prioritization of PABA production over D-alanine/D-glutamate biosynthesis. The polypeptide is Bifunctional aminodeoxychorismate lyase / D-amino acid transaminase (Mycobacterium tuberculosis (strain ATCC 25618 / H37Rv)).